We begin with the raw amino-acid sequence, 317 residues long: Cytochrome f (317 aa).

Positions 1–34 are cleaved as a signal peptide; that stretch reads MKGLKNQIMKKTSLFICTLLFISSIVFHPKITFA. Positions 35, 55, 58, and 59 each coordinate heme. Residues 284–304 traverse the membrane as a helical segment; sequence VIGLIAFFIGVGLTQILLVLK.

The protein belongs to the cytochrome f family. As to quaternary structure, the 4 large subunits of the cytochrome b6-f complex are cytochrome b6, subunit IV (17 kDa polypeptide, PetD), cytochrome f and the Rieske protein, while the 4 small subunits are PetG, PetL, PetM and PetN. The complex functions as a dimer. Heme is required as a cofactor.

It localises to the cellular thylakoid membrane. Functionally, component of the cytochrome b6-f complex, which mediates electron transfer between photosystem II (PSII) and photosystem I (PSI), cyclic electron flow around PSI, and state transitions. This chain is Cytochrome f, found in Prochlorococcus marinus (strain MIT 9301).